A 364-amino-acid chain; its full sequence is Fructose-1,6-bisphosphatase class 1 2 (364 aa).

Residues Glu-99, Asp-121, Leu-123, and Asp-124 each contribute to the Mg(2+) site. Residues 124 to 127 (DGSS) and Asn-220 each bind substrate. Glu-292 is a binding site for Mg(2+).

It belongs to the FBPase class 1 family. Homotetramer. It depends on Mg(2+) as a cofactor.

It localises to the cytoplasm. It carries out the reaction beta-D-fructose 1,6-bisphosphate + H2O = beta-D-fructose 6-phosphate + phosphate. It functions in the pathway carbohydrate biosynthesis; gluconeogenesis. This is Fructose-1,6-bisphosphatase class 1 2 from Polaromonas naphthalenivorans (strain CJ2).